We begin with the raw amino-acid sequence, 87 residues long: UPF0386 protein RSKD131_0371 (87 aa).

It belongs to the UPF0386 family.

The polypeptide is UPF0386 protein RSKD131_0371 (Cereibacter sphaeroides (strain KD131 / KCTC 12085) (Rhodobacter sphaeroides)).